We begin with the raw amino-acid sequence, 142 residues long: Glia maturation factor gamma (142 aa).

S2 bears the N-acetylserine mark. Residues 4 to 139 (SLVVCEVDPE…TETWLKEKLA (136 aa)) form the ADF-H domain.

The protein belongs to the actin-binding proteins ADF family. GMF subfamily.

The polypeptide is Glia maturation factor gamma (Gmfg) (Mus musculus (Mouse)).